The sequence spans 403 residues: Serine/threonine transporter SstT (403 aa).

8 consecutive transmembrane segments (helical) span residues 11 to 31 (GNLV…AFIS), 51 to 71 (AIAP…KEVG), 81 to 101 (VMYV…SFIF), 138 to 158 (ALAN…GIPL), 175 to 195 (AVSY…FGLV), 213 to 233 (LLGV…PILV), 285 to 305 (VAIP…VTVL), and 319 to 339 (FMTA…ASGV).

It belongs to the dicarboxylate/amino acid:cation symporter (DAACS) (TC 2.A.23) family.

Its subcellular location is the cell inner membrane. It catalyses the reaction L-serine(in) + Na(+)(in) = L-serine(out) + Na(+)(out). The catalysed reaction is L-threonine(in) + Na(+)(in) = L-threonine(out) + Na(+)(out). In terms of biological role, involved in the import of serine and threonine into the cell, with the concomitant import of sodium (symport system). The polypeptide is Serine/threonine transporter SstT (Haemophilus ducreyi (strain 35000HP / ATCC 700724)).